We begin with the raw amino-acid sequence, 644 residues long: Threonine--tRNA ligase (644 aa).

The TGS domain maps to 1 to 61 (MVAITLPDGN…TQDASVEIVT (61 aa)). Residues 242–533 (DHRKIGKALN…LIEHYAGWMP (292 aa)) form a catalytic region. Positions 333, 384, and 510 each coordinate Zn(2+).

Belongs to the class-II aminoacyl-tRNA synthetase family. As to quaternary structure, homodimer. Requires Zn(2+) as cofactor.

It localises to the cytoplasm. The enzyme catalyses tRNA(Thr) + L-threonine + ATP = L-threonyl-tRNA(Thr) + AMP + diphosphate + H(+). In terms of biological role, catalyzes the attachment of threonine to tRNA(Thr) in a two-step reaction: L-threonine is first activated by ATP to form Thr-AMP and then transferred to the acceptor end of tRNA(Thr). Also edits incorrectly charged L-seryl-tRNA(Thr). The chain is Threonine--tRNA ligase from Psychrobacter sp. (strain PRwf-1).